Here is a 259-residue protein sequence, read N- to C-terminus: Flagellar L-ring protein 1 (259 aa).

The first 15 residues, 1–15 (MKRICLLALITTMSG), serve as a signal peptide directing secretion. The N-palmitoyl cysteine moiety is linked to residue Cys-16. The S-diacylglycerol cysteine moiety is linked to residue Cys-16. Residues 38-63 (EGDKSKDESSGIVDTLRGRNDPVAGD) are disordered.

It belongs to the FlgH family. In terms of assembly, the basal body constitutes a major portion of the flagellar organelle and consists of four rings (L,P,S, and M) mounted on a central rod.

It is found in the cell outer membrane. The protein localises to the bacterial flagellum basal body. Assembles around the rod to form the L-ring and probably protects the motor/basal body from shearing forces during rotation. This is Flagellar L-ring protein 1 (flgH1) from Vibrio parahaemolyticus serotype O3:K6 (strain RIMD 2210633).